An 858-amino-acid chain; its full sequence is Elongation factor 2 (858 aa).

Positions 17 to 362 constitute a tr-type G domain; it reads ANIRNMSVIA…MITIHLPSPV (346 aa). 26–33 contacts GTP; it reads AHVDHGKS. Thr-54 bears the Phosphothreonine mark. Thr-57 is subject to Phosphothreonine; by EEF2K. A Phosphothreonine modification is found at Thr-59. Lys-152 carries the N6-succinyllysine modification. Residues 158-161 and 216-218 contribute to the GTP site; these read NKMD and SGL. Lys-235 carries the post-translational modification N6-acetyllysine. Lys-239 is subject to N6-acetyllysine; alternate. Lys-239 participates in a covalent cross-link: Glycyl lysine isopeptide (Lys-Gly) (interchain with G-Cter in SUMO1); alternate. Tyr-265 carries the post-translational modification Phosphotyrosine; by CSK. Position 272 is an N6-acetyllysine; alternate (Lys-272). Lys-272 is modified (N6-succinyllysine; alternate). Lys-275 is modified (N6-acetyllysine). Residue Lys-322 forms a Glycyl lysine isopeptide (Lys-Gly) (interchain with G-Cter in SUMO) linkage. Ser-325 bears the Phosphoserine mark. Phosphotyrosine; by CSK is present on Tyr-373. At Thr-435 the chain carries Phosphothreonine. Residues Lys-439 and Lys-445 each carry the N6-acetyllysine modification. At Ser-502 the chain carries Phosphoserine. The residue at position 525 (Lys-525) is an N6,N6,N6-trimethyllysine; by EEF2KMT. Lys-529 is covalently cross-linked (Glycyl lysine isopeptide (Lys-Gly) (interchain with G-Cter in SUMO)). Residue Lys-572 is modified to N6-succinyllysine. Ser-595 carries the phosphoserine; by CDK2 modification. Lys-619 is modified (N6-acetyllysine). The residue at position 715 (His-715) is a Diphthamide.

It belongs to the TRAFAC class translation factor GTPase superfamily. Classic translation factor GTPase family. EF-G/EF-2 subfamily. As to quaternary structure, binds to 80S ribosomes. Actively translating ribosomes show mutually exclusive binding of eIF5a (EIF5A or EIF5A2) and EEF2/eEF2. Interacts with SERBP1; interaction sequesters EEF2/eEF2 at the A-site of the ribosome, thereby blocking the interaction sites of the mRNA-tRNA complex, promoting ribosome stabilization and hibernation. Interacts with HABP4; interaction takes place at the A-site of hibernating ribosomes and promotes ribosome stabilization. Component of the mRNA surveillance SURF complex, at least composed of ERF1, ERF3 (ERF3A or ERF3B), EEF2, UPF1/RENT1, SMG1, SMG8 and SMG9. Interacts with RBPMS2. Post-translationally, phosphorylation by EF-2 kinase completely inactivates EF-2; it requires prior phosphorylation by CDK2 at Ser-595 during mitotic prometaphase. Phosphorylation by CSK promotes SUMOylation, proteolytic cleavage, and nuclear translocation if the C-terminal fragment. Diphthamide is 2-[3-carboxyamido-3-(trimethyl-ammonio)propyl]histidine. In terms of processing, ISGylated. Post-translationally, proteolytically processed at two sites following phosphorylation by CSK. SUMOylated following phosphorylation by CSK, promotes proteolytic cleavage.

The protein resides in the cytoplasm. It localises to the nucleus. The enzyme catalyses GTP + H2O = GDP + phosphate + H(+). Its function is as follows. Catalyzes the GTP-dependent ribosomal translocation step during translation elongation. During this step, the ribosome changes from the pre-translocational (PRE) to the post-translocational (POST) state as the newly formed A-site-bound peptidyl-tRNA and P-site-bound deacylated tRNA move to the P and E sites, respectively. Catalyzes the coordinated movement of the two tRNA molecules, the mRNA and conformational changes in the ribosome. In Callithrix jacchus (White-tufted-ear marmoset), this protein is Elongation factor 2 (EEF2).